Reading from the N-terminus, the 181-residue chain is CAPA peptides (181 aa).

An N-terminal signal peptide occupies residues 1–22; it reads MQDNRFFILMILLVFSTSLNQG. The propeptide occupies 23-29; the sequence is QKLKAND. An Isoleucine amide modification is found at isoleucine 41. Positions 44 to 54 are excised as a propeptide; the sequence is NSEISSFSRSE. Isoleucine 65 carries the isoleucine amide modification. The propeptide occupies 68–181; sequence SDVSSFDNLN…ENERDTANFL (114 aa). Residues 159 to 181 form a disordered region; the sequence is TQGQGGYTPRLGRENERDTANFL. Basic and acidic residues predominate over residues 169–181; sequence LGRENERDTANFL.

A pyrokinin potentially constituted by residues Asn-158 to Gly-170 has so far not been detected and might be completely absent in ants. Periviscerokinin 1 and 2 are expressed in central brain, antennal lobes and gnathal, thoracic and abominal ganglia. Periviscerokinin 2 is also expressed in the retrocerebral complex (at protein level).

It is found in the secreted. Its function is as follows. Periviscerokinins mediate visceral muscle contractile activity (myotropic activity). The chain is CAPA peptides from Camponotus floridanus (Florida carpenter ant).